The chain runs to 199 residues: dITP/XTP pyrophosphatase (199 aa).

Residue 8–13 (SGNAGK) participates in substrate binding. Asp69 functions as the Proton acceptor in the catalytic mechanism. Asp69 lines the Mg(2+) pocket. Residues Ser70, 154–157 (FGYN), Lys177, and 182–183 (HR) contribute to the substrate site.

This sequence belongs to the HAM1 NTPase family. As to quaternary structure, homodimer. Mg(2+) is required as a cofactor.

It catalyses the reaction XTP + H2O = XMP + diphosphate + H(+). It carries out the reaction dITP + H2O = dIMP + diphosphate + H(+). The catalysed reaction is ITP + H2O = IMP + diphosphate + H(+). Pyrophosphatase that catalyzes the hydrolysis of nucleoside triphosphates to their monophosphate derivatives, with a high preference for the non-canonical purine nucleotides XTP (xanthosine triphosphate), dITP (deoxyinosine triphosphate) and ITP. Seems to function as a house-cleaning enzyme that removes non-canonical purine nucleotides from the nucleotide pool, thus preventing their incorporation into DNA/RNA and avoiding chromosomal lesions. In Xanthomonas oryzae pv. oryzae (strain KACC10331 / KXO85), this protein is dITP/XTP pyrophosphatase.